A 543-amino-acid polypeptide reads, in one-letter code: Serine/threonine-protein kinase PkaA (543 aa).

The region spanning 8-276 (YLLEEPLGRG…ENLARGLRVV (269 aa)) is the Protein kinase domain. Residues 14-22 (LGRGATGTV) and Lys48 contribute to the ATP site. The active-site Proton acceptor is Asp142. The tract at residues 303 to 480 (PAPAQVPGAP…RQRSANPMRI (178 aa)) is disordered. Over residues 352 to 361 (VMPPVPPGQP) the composition is skewed to pro residues. Composition is skewed to low complexity over residues 407–420 (RQVS…RQAP) and 428–451 (PGYG…QPQR). Residues 452-461 (YAPPPAPEPQ) show a composition bias toward pro residues.

The protein belongs to the protein kinase superfamily. Ser/Thr protein kinase family. In terms of processing, autophosphorylated mainly at Thr and slightly at Ser.

The enzyme catalyses L-seryl-[protein] + ATP = O-phospho-L-seryl-[protein] + ADP + H(+). It catalyses the reaction L-threonyl-[protein] + ATP = O-phospho-L-threonyl-[protein] + ADP + H(+). The sequence is that of Serine/threonine-protein kinase PkaA (pkaA) from Streptomyces coelicolor (strain ATCC BAA-471 / A3(2) / M145).